Here is a 265-residue protein sequence, read N- to C-terminus: Isoprenyl transferase (265 aa).

Aspartate 35 is a catalytic residue. Position 35 (aspartate 35) interacts with Mg(2+). Substrate contacts are provided by residues 36–39, tryptophan 40, arginine 48, histidine 52, and 80–82; these read GNGR and SIE. Asparagine 83 functions as the Proton acceptor in the catalytic mechanism. Residues tryptophan 84, arginine 86, arginine 203, and 209–211 contribute to the substrate site; that span reads RIS. Residue glutamate 222 coordinates Mg(2+).

This sequence belongs to the UPP synthase family. Homodimer. It depends on Mg(2+) as a cofactor.

Functionally, catalyzes the condensation of isopentenyl diphosphate (IPP) with allylic pyrophosphates generating different type of terpenoids. The protein is Isoprenyl transferase of Chlorobaculum tepidum (strain ATCC 49652 / DSM 12025 / NBRC 103806 / TLS) (Chlorobium tepidum).